The primary structure comprises 944 residues: Protein unc-45 homolog A (944 aa).

A disordered region spans residues 1 to 25 (MTVSGPETPEPRPSDPGASSAEQLR). 3 TPR repeats span residues 21–54 (AEQL…GATP), 58–91 (AILH…DGGD), and 92–125 (VKAL…EPKN). Lys70 carries the N6-acetyllysine modification. Lys483 is modified (N6-acetyllysine).

As to quaternary structure, interacts with PGR isoforms A and B as well as with NR3C1 in the absence of ligand, and with HSP90AB1. Binding to HSP90AB1 involves 2 UNC45A monomers per HSP90AB1 dimer. As to expression, detected in spleen, bone marrow, lung and ovary, and at lower levels in testis, kidney, heart and brain (at protein level). Ubiquitous. Detected in uterus, large intestine, kidney, spleen, lung, brain, liver and ovary.

The protein resides in the cytoplasm. Its subcellular location is the perinuclear region. It is found in the nucleus. Its function is as follows. May act as co-chaperone for HSP90 (Potential). Prevents the stimulation of HSP90AB1 ATPase activity by AHSA1. Positive factor in promoting PGR function in the cell. May be necessary for proper folding of myosin (Potential). Necessary for normal cell proliferation. Necessary for normal myotube formation and myosin accumulation during muscle cell development. May play a role in erythropoiesis in stroma cells in the spleen. The chain is Protein unc-45 homolog A (Unc45a) from Mus musculus (Mouse).